Reading from the N-terminus, the 524-residue chain is L-tyrosine:2-oxoglutarate aminotransferase atrD (524 aa).

The protein belongs to the class-I pyridoxal-phosphate-dependent aminotransferase family. Pyridoxal 5'-phosphate serves as cofactor.

It carries out the reaction L-tyrosine + 2-oxoglutarate = 3-(4-hydroxyphenyl)pyruvate + L-glutamate. It functions in the pathway secondary metabolite biosynthesis. Functionally, the L-tyrosine:2-oxoglutarate aminotransferase atrD and the atromentin synthetase atrA catalyze consecutive steps to turn over L-tyrosine into atromentin, which represents the generic precursor molecule for the entire terphenylquinone and pulvinic acid family of pigments, which are widely distributed secondary metabolites in homobasidiomycetes. The first step is catalyzed by atrD which converts L-tyrosine in to 4-hydroxyphenylpyruvate (4-HPP). Adenylation of two 4-HPP monomers by the atrA adenylation (A) domain, ester bond formation between monomers and atrA, and symmetric C-C-bond formation between two monomers by atrA leads to atromentin. This Tapinella panuoides (Oyster rollrim mushroom) protein is L-tyrosine:2-oxoglutarate aminotransferase atrD.